The primary structure comprises 181 residues: Large ribosomal subunit protein uL6 (181 aa).

This sequence belongs to the universal ribosomal protein uL6 family. Part of the 50S ribosomal subunit.

Functionally, this protein binds to the 23S rRNA, and is important in its secondary structure. It is located near the subunit interface in the base of the L7/L12 stalk, and near the tRNA binding site of the peptidyltransferase center. The sequence is that of Large ribosomal subunit protein uL6 from Lawsonia intracellularis (strain PHE/MN1-00).